Reading from the N-terminus, the 255-residue chain is Small ribosomal subunit protein uS2 (255 aa).

It belongs to the universal ribosomal protein uS2 family.

The sequence is that of Small ribosomal subunit protein uS2 (rpsB) from Streptococcus pyogenes serotype M1.